The chain runs to 275 residues: Large ribosomal subunit protein uL2 (275 aa).

2 disordered regions span residues 34-59 (LEKK…GGHK) and 223-275 (VAMN…RNKK).

This sequence belongs to the universal ribosomal protein uL2 family. Part of the 50S ribosomal subunit. Forms a bridge to the 30S subunit in the 70S ribosome.

Functionally, one of the primary rRNA binding proteins. Required for association of the 30S and 50S subunits to form the 70S ribosome, for tRNA binding and peptide bond formation. It has been suggested to have peptidyltransferase activity; this is somewhat controversial. Makes several contacts with the 16S rRNA in the 70S ribosome. The chain is Large ribosomal subunit protein uL2 from Teredinibacter turnerae (strain ATCC 39867 / T7901).